The following is a 434-amino-acid chain: 26S proteasome regulatory subunit RPN6 (434 aa).

Serine 2 is modified (N-acetylserine). Residues alanine 235 to asparagine 404 form the PCI domain.

This sequence belongs to the proteasome subunit S9 family. In terms of assembly, component of the lid subcomplex of the 19S proteasome regulatory particle complex (also named PA700 complex). The 26S proteasome consists of a 20S proteasome core and two 19S regulatory subunits. N-acetylated by NAT1.

Functionally, component of the lid subcomplex of the 26S proteasome, a multiprotein complex involved in the ATP-dependent degradation of ubiquitinated proteins. In the complex, RPN6 is required for proteasome assembly. The polypeptide is 26S proteasome regulatory subunit RPN6 (RPN6) (Saccharomyces cerevisiae (strain ATCC 204508 / S288c) (Baker's yeast)).